Here is a 140-residue protein sequence, read N- to C-terminus: 3-hydroxyacyl-[acyl-carrier-protein] dehydratase FabZ (140 aa).

His-47 is a catalytic residue.

The protein belongs to the thioester dehydratase family. FabZ subfamily.

It is found in the cytoplasm. It carries out the reaction a (3R)-hydroxyacyl-[ACP] = a (2E)-enoyl-[ACP] + H2O. Involved in unsaturated fatty acids biosynthesis. Catalyzes the dehydration of short chain beta-hydroxyacyl-ACPs and long chain saturated and unsaturated beta-hydroxyacyl-ACPs. The polypeptide is 3-hydroxyacyl-[acyl-carrier-protein] dehydratase FabZ (Streptococcus sanguinis (strain SK36)).